We begin with the raw amino-acid sequence, 362 residues long: Myricetin 3'-O-methyltransferase 4 (362 aa).

S-adenosyl-L-methionine is bound at residue Asp-229. His-267 functions as the Proton acceptor in the catalytic mechanism.

The protein belongs to the class I-like SAM-binding methyltransferase superfamily. Cation-independent O-methyltransferase family. Homodimer. Mainly expressed in stem and petiole trichomes.

The enzyme catalyses myricetin + S-adenosyl-L-methionine = laricitrin + S-adenosyl-L-homocysteine + H(+). It functions in the pathway flavonoid metabolism. Functionally, flavonoid 3'-O-methyltransferase involved in the biosynthesis of polymethoxylated flavonoids natural products such as myricetin derivatives, aroma compounds possessing antioxidant properties and exhibiting pharmacological activities such as anti-carcinogen, anti-viral, anti-thrombotic, anti-diabetic, anti-atherosclerotic, and anti-inflammatory effects. Catalyzes S-adenosylmethionine-dependent regioselective 3'-O-methylation of flavonoids; active on various hydroxylated flavonoid substrates, including myricetin, thus producing 3'-methyl myricetin (laricitrin). The protein is Myricetin 3'-O-methyltransferase 4 of Solanum lycopersicum (Tomato).